Reading from the N-terminus, the 292-residue chain is Formamidopyrimidine-DNA glycosylase (292 aa).

Catalysis depends on proline 2, which acts as the Schiff-base intermediate with DNA. Glutamate 3 functions as the Proton donor in the catalytic mechanism. Lysine 60 functions as the Proton donor; for beta-elimination activity in the catalytic mechanism. 3 residues coordinate DNA: histidine 109, arginine 128, and lysine 173. Residues 258-292 form an FPG-type zinc finger; it reads NVYRRTGKKCRQCKNLIERQKISGRSTHWCRKCQK. The active-site Proton donor; for delta-elimination activity is the arginine 282.

This sequence belongs to the FPG family. In terms of assembly, monomer. The cofactor is Zn(2+).

It carries out the reaction Hydrolysis of DNA containing ring-opened 7-methylguanine residues, releasing 2,6-diamino-4-hydroxy-5-(N-methyl)formamidopyrimidine.. The enzyme catalyses 2'-deoxyribonucleotide-(2'-deoxyribose 5'-phosphate)-2'-deoxyribonucleotide-DNA = a 3'-end 2'-deoxyribonucleotide-(2,3-dehydro-2,3-deoxyribose 5'-phosphate)-DNA + a 5'-end 5'-phospho-2'-deoxyribonucleoside-DNA + H(+). Its function is as follows. Involved in base excision repair of DNA damaged by oxidation or by mutagenic agents. Acts as a DNA glycosylase that recognizes and removes damaged bases. Has a preference for oxidized purines, such as 7,8-dihydro-8-oxoguanine (8-oxoG). Has AP (apurinic/apyrimidinic) lyase activity and introduces nicks in the DNA strand. Cleaves the DNA backbone by beta-delta elimination to generate a single-strand break at the site of the removed base with both 3'- and 5'-phosphates. The chain is Formamidopyrimidine-DNA glycosylase from Prochlorococcus marinus subsp. pastoris (strain CCMP1986 / NIES-2087 / MED4).